We begin with the raw amino-acid sequence, 159 residues long: Deoxyuridine 5'-triphosphate nucleotidohydrolase (159 aa).

Residues 78-80 (RSG), Asn91, 95-97 (LID), and Met105 contribute to the substrate site.

The protein belongs to the dUTPase family. Mg(2+) is required as a cofactor.

It catalyses the reaction dUTP + H2O = dUMP + diphosphate + H(+). It participates in pyrimidine metabolism; dUMP biosynthesis; dUMP from dCTP (dUTP route): step 2/2. Its function is as follows. This enzyme is involved in nucleotide metabolism: it produces dUMP, the immediate precursor of thymidine nucleotides and it decreases the intracellular concentration of dUTP so that uracil cannot be incorporated into DNA. This Buchnera aphidicola subsp. Schizaphis graminum (strain Sg) protein is Deoxyuridine 5'-triphosphate nucleotidohydrolase.